A 258-amino-acid chain; its full sequence is Alpha-hydroxynitrile lyase (258 aa).

Catalysis depends on proton donor/acceptor residues Ser81 and His236.

It belongs to the AB hydrolase superfamily. Hydroxynitrile lyase family. As to quaternary structure, homodimer.

It catalyses the reaction (R)-mandelonitrile = benzaldehyde + hydrogen cyanide. In terms of biological role, involved in cyanogenesis, the release of HCN from injured tissues. Displays R-selective hydroxynitrile lyase activity. Also accepts nitromethane (MeNO2) as a donor in a reaction with aromatic aldehydes to yield (R)-beta-nitro alcohols. This Arabidopsis thaliana (Mouse-ear cress) protein is Alpha-hydroxynitrile lyase.